The following is a 275-amino-acid chain: Uronate dehydrogenase (275 aa).

Residues glycine 22 to leucine 23, aspartate 42 to alanine 44, aspartate 60 to leucine 61, and phenylalanine 80 to serine 84 contribute to the NAD(+) site. Substrate is bound by residues serine 84 and serine 120–histidine 122. Tyrosine 145 functions as the Proton acceptor in the catalytic mechanism. Lysine 149 provides a ligand contact to NAD(+). Residue serine 174 coordinates substrate. Serine 175 serves as a coordination point for NAD(+). Arginine 183 lines the substrate pocket.

Belongs to the NAD(P)-dependent epimerase/dehydratase family. In terms of assembly, homohexamer.

It carries out the reaction beta-D-galacturonate + NAD(+) = D-galactaro-1,5-lactone + NADH + H(+). The catalysed reaction is beta-D-glucuronate + NAD(+) = D-glucaro-1,5-lactone + NADH + H(+). It functions in the pathway carbohydrate acid metabolism; D-galacturonate degradation via prokaryotic oxidative pathway. Catalyzes the oxidation of beta-D-galacturonate and beta-D-glucuronate to galactarate and D-glucarate, respectively. Cannot use NADP(+) instead of NAD(+) as cosubstrate. The protein is Uronate dehydrogenase (udh) of Pseudomonas syringae pv. tomato (strain ATCC BAA-871 / DC3000).